A 327-amino-acid polypeptide reads, in one-letter code: ATPase ASNA1 homolog (327 aa).

K26–T33 is a binding site for ATP. D57 is an active-site residue. Positions 238 and 265 each coordinate ATP. Residues C274 and C277 each contribute to the Zn(2+) site.

Belongs to the arsA ATPase family. In terms of assembly, homodimer.

The protein resides in the cytoplasm. The protein localises to the endoplasmic reticulum. ATPase required for the post-translational delivery of tail-anchored (TA) proteins to the endoplasmic reticulum. Recognizes and selectively binds the transmembrane domain of TA proteins in the cytosol. This complex then targets to the endoplasmic reticulum by membrane-bound receptors, where the tail-anchored protein is released for insertion. This process is regulated by ATP binding and hydrolysis. ATP binding drives the homodimer towards the closed dimer state, facilitating recognition of newly synthesized TA membrane proteins. ATP hydrolysis is required for insertion. Subsequently, the homodimer reverts towards the open dimer state, lowering its affinity for the membrane-bound receptor, and returning it to the cytosol to initiate a new round of targeting. This is ATPase ASNA1 homolog from Entamoeba histolytica (strain ATCC 30459 / HM-1:IMSS / ABRM).